We begin with the raw amino-acid sequence, 251 residues long: Large ribosomal subunit protein uL16m (251 aa).

The N-terminal 29 residues, 1 to 29 (MWRLLSGARAPVLRATLSDSWAAPPARAG), are a transit peptide targeting the mitochondrion.

The protein belongs to the universal ribosomal protein uL16 family. In terms of assembly, component of the mitochondrial ribosome large subunit (39S) which comprises a 16S rRNA and about 50 distinct proteins.

It is found in the mitochondrion. The chain is Large ribosomal subunit protein uL16m (MRPL16) from Bos taurus (Bovine).